A 125-amino-acid polypeptide reads, in one-letter code: MARIAGIDLPNNKQLQIALTSIYGIGRARALEICRKTDILPEKRAKDLDNDEVNKLRKIIESDYVVEGKLRSELAMSIKRLMDIACYRGLRHRKGLPLRGQRTKTNARTRKGKRKTVANKKMAAK.

The disordered stretch occupies residues 99–125 (RGQRTKTNARTRKGKRKTVANKKMAAK).

The protein belongs to the universal ribosomal protein uS13 family. As to quaternary structure, part of the 30S ribosomal subunit. Forms a loose heterodimer with protein S19. Forms two bridges to the 50S subunit in the 70S ribosome.

Located at the top of the head of the 30S subunit, it contacts several helices of the 16S rRNA. In the 70S ribosome it contacts the 23S rRNA (bridge B1a) and protein L5 of the 50S subunit (bridge B1b), connecting the 2 subunits; these bridges are implicated in subunit movement. Contacts the tRNAs in the A and P-sites. This chain is Small ribosomal subunit protein uS13, found in Borrelia turicatae (strain 91E135).